A 268-amino-acid chain; its full sequence is Agamous-like MADS-box protein AGL15 (268 aa).

Positions 1 to 61 constitute an MADS-box domain; that stretch reads MGRGKIEIKR…GKLFEYSSTG (61 aa). The region spanning 80 to 170 is the K-box domain; sequence AEEDCAEVDI…RRQVQELRSF (91 aa). Positions 205 to 268 are disordered; sequence TDSDTTLQLG…PEAKRQRFSV (64 aa). Basic and acidic residues predominate over residues 218-232; sequence EAHDRRTNEGERESP. Over residues 233 to 244 the composition is skewed to polar residues; that stretch reads SSDSVTTNTSSE.

As to quaternary structure, homodimer. Interacts with SVP, AGL24, AP1, AGL6, AG, AGL1, AGL11, AGL5, AGL16, SOC1 and AGL21. Expressed at low levels in flowers and siliques. Also present in seedlings. Detected during embryogenesis and accumulates during early seed development (at protein level). Expressed in shoot apices and the base of leaf petioles.

The protein localises to the nucleus. It localises to the cytoplasm. Functionally, transcription factor involved in the negative regulation of flowering, probably through the photoperiodic pathway. Acts both as an activator and as a repressor of transcription. Binds DNA in a sequence-specific manner in large CArG motif 5'-CC (A/T)8 GG-3'. Participates probably in the regulation of programs active during the early stages of embryo development. Prevents premature perianth senescence and abscission, fruits development and seed desiccation. Stimulates the expression of at least DTA4, LEC2, FUS3, ABI3, AT4G38680/CSP2 and GRP2B/CSP4. Can enhance somatic embryo development in vitro. The protein is Agamous-like MADS-box protein AGL15 (AGL15) of Arabidopsis thaliana (Mouse-ear cress).